Here is a 1793-residue protein sequence, read N- to C-terminus: Nucleoporin NUP145 (1793 aa).

GLFG repeat units lie at residues 50 to 53 (GLFG), 143 to 146 (GLFG), 255 to 258 (GLFG), 282 to 285 (GLFG), 292 to 295 (GLFG), 306 to 309 (GLFG), 336 to 339 (GLFG), 381 to 384 (GLFG), and 395 to 398 (GLFG). Disordered regions lie at residues 404 to 583 (GSAF…QQPQ), 740 to 859 (RTDL…EPGA), 999 to 1043 (GDDD…DDTF), and 1066 to 1097 (EVAN…PEDE). Residues 417–431 (NQSTGTSLFGNTQQK) show a composition bias toward polar residues. GLFG repeat units lie at residues 434–437 (GLFG), 446–449 (GLFG), 470–473 (GLFG), 481–484 (GLFG), and 496–499 (GLFG). Residues 437-459 (GSTTTNTSGGLFGSTNTGTSTFG) are compositionally biased toward low complexity. Over residues 467–483 (TGGGLFGSKPAGTGGLF) the composition is skewed to gly residues. Residues 500–511 (NLNTNAQTQQPA) are compositionally biased toward polar residues. The stretch at 514-517 (GLFG) is one GLFG 15 repeat. Residues 518–535 (NLGQNNQAKPSLFGTSTT) are compositionally biased toward low complexity. Residues 539 to 542 (GLFG) form a GLFG 16 repeat. Composition is skewed to polar residues over residues 546–575 (AQQQ…FGSS) and 801–813 (STAN…NGAK). A compositionally biased stretch (low complexity) spans 814–823 (SSPVAAASPP). Positions 826–840 (EQVKGKELAVVHEEE) are enriched in basic and acidic residues. The 137-residue stretch at 857–993 (PGAYWMSPTA…GVWAFSVEHF (137 aa)) folds into the Peptidase S59 domain. Residues 859-992 (AYWMSPTADD…TGVWAFSVEH (134 aa)) form a nucleoporin RNA-binding motif (NRM) region. A compositionally biased stretch (acidic residues) spans 999–1013 (GDDDDYDDDDYETEP). The segment covering 1025-1037 (TSPSISKSSTSPI) has biased composition (low complexity).

Belongs to the nucleoporin GLFG family. In terms of assembly, component of the nuclear pore complex (NPC). NPC constitutes the exclusive means of nucleocytoplasmic transport. NPCs allow the passive diffusion of ions and small molecules and the active, nuclear transport receptor-mediated bidirectional transport of macromolecules such as proteins, RNAs, ribonucleoparticles (RNPs), and ribosomal subunits across the nuclear envelope. Due to its 8-fold rotational symmetry, all subunits are present with 8 copies or multiples thereof. NUP145 is autocatalytically cleaved in NUP145N and NUP145C.

It localises to the nucleus. It is found in the nuclear pore complex. Its subcellular location is the nucleus membrane. Its function is as follows. Functions as a component of the nuclear pore complex (NPC). NPC components, collectively referred to as nucleoporins (NUPs), can play the role of both NPC structural components and of docking or interaction partners for transiently associated nuclear transport factors. Active directional transport is assured by both, a Phe-Gly (FG) repeat affinity gradient for these transport factors across the NPC and a transport cofactor concentration gradient across the nuclear envelope. NUP145 is autocatalytically cleaved in vivo in 2 polypeptides which assume different functions in the NPC. NUP145N as one of the FG repeat nucleoporins participates in karyopherin interactions and contains part of the autocatalytic cleavage activity. NUP145C as part of the NUP84 complex is involved in nuclear poly(A)+ RNA and tRNA export. This Chaetomium thermophilum (strain DSM 1495 / CBS 144.50 / IMI 039719) (Thermochaetoides thermophila) protein is Nucleoporin NUP145 (NUP145).